Reading from the N-terminus, the 406-residue chain is Tryptophan synthase beta chain (406 aa).

Lys-95 bears the N6-(pyridoxal phosphate)lysine mark.

It belongs to the TrpB family. In terms of assembly, tetramer of two alpha and two beta chains. It depends on pyridoxal 5'-phosphate as a cofactor.

It catalyses the reaction (1S,2R)-1-C-(indol-3-yl)glycerol 3-phosphate + L-serine = D-glyceraldehyde 3-phosphate + L-tryptophan + H2O. The protein operates within amino-acid biosynthesis; L-tryptophan biosynthesis; L-tryptophan from chorismate: step 5/5. Its function is as follows. The beta subunit is responsible for the synthesis of L-tryptophan from indole and L-serine. This Azotobacter vinelandii (strain DJ / ATCC BAA-1303) protein is Tryptophan synthase beta chain.